Reading from the N-terminus, the 562-residue chain is Long-chain-fatty-acid--CoA ligase (562 aa).

213–224 (YTGGTTGVAKGA) contributes to the ATP binding site.

It belongs to the ATP-dependent AMP-binding enzyme family. Mg(2+) serves as cofactor.

Its subcellular location is the membrane. The enzyme catalyses a long-chain fatty acid + ATP + CoA = a long-chain fatty acyl-CoA + AMP + diphosphate. It participates in lipid metabolism; fatty acid beta-oxidation. Catalyzes the esterification, concomitant with transport, of exogenous long-chain fatty acids into metabolically active CoA thioesters for subsequent degradation or incorporation into phospholipids. This Yersinia pestis protein is Long-chain-fatty-acid--CoA ligase (fadD).